Consider the following 317-residue polypeptide: Spermidine synthase 2 (317 aa).

Residues 27-264 (PGWFSEISPL…GMIGFMLCST (238 aa)) form the PABS domain. Residue glutamine 58 coordinates S-adenosyl 3-(methylsulfanyl)propylamine. Residue tyrosine 88 participates in putrescine binding. S-adenosyl 3-(methylsulfanyl)propylamine-binding positions include glutamine 89, aspartate 113, glutamate 133, 164-165 (DG), and aspartate 183. Aspartate 183 functions as the Proton acceptor in the catalytic mechanism. Residues 183-186 (DSSD) and tyrosine 252 contribute to the putrescine site.

Belongs to the spermidine/spermine synthase family.

It catalyses the reaction S-adenosyl 3-(methylsulfanyl)propylamine + putrescine = S-methyl-5'-thioadenosine + spermidine + H(+). It participates in amine and polyamine biosynthesis; spermidine biosynthesis; spermidine from putrescine: step 1/1. The sequence is that of Spermidine synthase 2 from Datura stramonium (Jimsonweed).